A 178-amino-acid chain; its full sequence is Endoribonuclease YbeY (178 aa).

Zn(2+) is bound by residues His118, His122, and His128.

This sequence belongs to the endoribonuclease YbeY family. It depends on Zn(2+) as a cofactor.

Its subcellular location is the cytoplasm. Functionally, single strand-specific metallo-endoribonuclease involved in late-stage 70S ribosome quality control and in maturation of the 3' terminus of the 16S rRNA. This is Endoribonuclease YbeY from Mycobacterium leprae (strain Br4923).